Consider the following 322-residue polypeptide: 4-hydroxy-3-methylbut-2-enyl diphosphate reductase (322 aa).

Position 15 (Cys-15) interacts with [4Fe-4S] cluster. Residues His-44 and His-77 each coordinate (2E)-4-hydroxy-3-methylbut-2-enyl diphosphate. Dimethylallyl diphosphate is bound by residues His-44 and His-77. His-44 and His-77 together coordinate isopentenyl diphosphate. Cys-99 provides a ligand contact to [4Fe-4S] cluster. His-127 is a (2E)-4-hydroxy-3-methylbut-2-enyl diphosphate binding site. His-127 serves as a coordination point for dimethylallyl diphosphate. His-127 is a binding site for isopentenyl diphosphate. Glu-129 functions as the Proton donor in the catalytic mechanism. Thr-168 provides a ligand contact to (2E)-4-hydroxy-3-methylbut-2-enyl diphosphate. A [4Fe-4S] cluster-binding site is contributed by Cys-198. The (2E)-4-hydroxy-3-methylbut-2-enyl diphosphate site is built by Ser-226, Ser-227, Asn-228, and Ser-270. Dimethylallyl diphosphate-binding residues include Ser-226, Ser-227, Asn-228, and Ser-270. Residues Ser-226, Ser-227, Asn-228, and Ser-270 each coordinate isopentenyl diphosphate.

The protein belongs to the IspH family. [4Fe-4S] cluster is required as a cofactor.

It carries out the reaction isopentenyl diphosphate + 2 oxidized [2Fe-2S]-[ferredoxin] + H2O = (2E)-4-hydroxy-3-methylbut-2-enyl diphosphate + 2 reduced [2Fe-2S]-[ferredoxin] + 2 H(+). The enzyme catalyses dimethylallyl diphosphate + 2 oxidized [2Fe-2S]-[ferredoxin] + H2O = (2E)-4-hydroxy-3-methylbut-2-enyl diphosphate + 2 reduced [2Fe-2S]-[ferredoxin] + 2 H(+). It functions in the pathway isoprenoid biosynthesis; dimethylallyl diphosphate biosynthesis; dimethylallyl diphosphate from (2E)-4-hydroxy-3-methylbutenyl diphosphate: step 1/1. The protein operates within isoprenoid biosynthesis; isopentenyl diphosphate biosynthesis via DXP pathway; isopentenyl diphosphate from 1-deoxy-D-xylulose 5-phosphate: step 6/6. In terms of biological role, catalyzes the conversion of 1-hydroxy-2-methyl-2-(E)-butenyl 4-diphosphate (HMBPP) into a mixture of isopentenyl diphosphate (IPP) and dimethylallyl diphosphate (DMAPP). Acts in the terminal step of the DOXP/MEP pathway for isoprenoid precursor biosynthesis. The protein is 4-hydroxy-3-methylbut-2-enyl diphosphate reductase of Neisseria meningitidis serogroup A / serotype 4A (strain DSM 15465 / Z2491).